The sequence spans 277 residues: Hydroxyethylthiazole kinase (277 aa).

Met56 serves as a coordination point for substrate. Residues Arg131 and Thr177 each contribute to the ATP site. Ala204 provides a ligand contact to substrate.

This sequence belongs to the Thz kinase family. Requires Mg(2+) as cofactor.

It carries out the reaction 5-(2-hydroxyethyl)-4-methylthiazole + ATP = 4-methyl-5-(2-phosphooxyethyl)-thiazole + ADP + H(+). Its pathway is cofactor biosynthesis; thiamine diphosphate biosynthesis; 4-methyl-5-(2-phosphoethyl)-thiazole from 5-(2-hydroxyethyl)-4-methylthiazole: step 1/1. Its function is as follows. Catalyzes the phosphorylation of the hydroxyl group of 4-methyl-5-beta-hydroxyethylthiazole (THZ). The protein is Hydroxyethylthiazole kinase of Gemmatimonas aurantiaca (strain DSM 14586 / JCM 11422 / NBRC 100505 / T-27).